We begin with the raw amino-acid sequence, 412 residues long: Short-chain specific acyl-CoA dehydrogenase, mitochondrial (412 aa).

The N-terminal 24 residues, 1–24, are a transit peptide targeting the mitochondrion; that stretch reads MAATLLARACGLVRGAPWPWGWRR. Position 27 is a phosphothreonine (threonine 27). Lysine 51 carries the N6-acetyllysine; alternate modification. Lysine 51 is subject to N6-succinyllysine; alternate. An N6-acetyllysine modification is found at lysine 72. An N6-acetyllysine; alternate modification is found at lysine 129. An N6-succinyllysine; alternate modification is found at lysine 129. FAD contacts are provided by residues 152–161 and 185–187; these read FALSEPGNGS and WIT. Serine 161 lines the substrate pocket. Residue lysine 208 is modified to N6-acetyllysine. Lysine 262 carries the post-translational modification N6-acetyllysine; alternate. Lysine 262 is modified (N6-succinyllysine; alternate). Residue 269 to 272 coordinates substrate; that stretch reads DTGR. Arginine 297 is a binding site for FAD. Lysine 306 is modified (N6-acetyllysine; alternate). Lysine 306 bears the N6-succinyllysine; alternate mark. Residues glutamine 308 and 365–369 contribute to the FAD site; that span reads QILGG. Glutamate 392 acts as the Proton acceptor in catalysis. Substrate is bound at residue glycine 393. Residue 394–396 participates in FAD binding; it reads TSE.

It belongs to the acyl-CoA dehydrogenase family. As to quaternary structure, homotetramer. The cofactor is FAD.

Its subcellular location is the mitochondrion matrix. The catalysed reaction is a short-chain 2,3-saturated fatty acyl-CoA + oxidized [electron-transfer flavoprotein] + H(+) = a short-chain (2E)-enoyl-CoA + reduced [electron-transfer flavoprotein]. It carries out the reaction butanoyl-CoA + oxidized [electron-transfer flavoprotein] + H(+) = (2E)-butenoyl-CoA + reduced [electron-transfer flavoprotein]. The enzyme catalyses pentanoyl-CoA + oxidized [electron-transfer flavoprotein] + H(+) = (2E)-pentenoyl-CoA + reduced [electron-transfer flavoprotein]. It catalyses the reaction hexanoyl-CoA + oxidized [electron-transfer flavoprotein] + H(+) = (2E)-hexenoyl-CoA + reduced [electron-transfer flavoprotein]. Its pathway is lipid metabolism; mitochondrial fatty acid beta-oxidation. In terms of biological role, short-chain specific acyl-CoA dehydrogenase is one of the acyl-CoA dehydrogenases that catalyze the first step of mitochondrial fatty acid beta-oxidation, an aerobic process breaking down fatty acids into acetyl-CoA and allowing the production of energy from fats. The first step of fatty acid beta-oxidation consists in the removal of one hydrogen from C-2 and C-3 of the straight-chain fatty acyl-CoA thioester, resulting in the formation of trans-2-enoyl-CoA. Among the different mitochondrial acyl-CoA dehydrogenases, short-chain specific acyl-CoA dehydrogenase acts specifically on acyl-CoAs with saturated 4 to 6 carbons long primary chains. This is Short-chain specific acyl-CoA dehydrogenase, mitochondrial (ACADS) from Bos taurus (Bovine).